The chain runs to 208 residues: Phosphoheptose isomerase (208 aa).

Positions 38–200 (MAVTLAKGHK…LFENVLALQP (163 aa)) constitute an SIS domain. Position 53–55 (53–55 (NGG)) interacts with substrate. Positions 62 and 66 each coordinate Zn(2+). Substrate contacts are provided by residues glutamate 66, 95–96 (ND), 121–123 (STS), serine 126, and glutamine 173. Residues glutamine 173 and histidine 181 each contribute to the Zn(2+) site.

This sequence belongs to the SIS family. GmhA subfamily. As to quaternary structure, homotetramer. Requires Zn(2+) as cofactor.

It is found in the cytoplasm. The catalysed reaction is 2 D-sedoheptulose 7-phosphate = D-glycero-alpha-D-manno-heptose 7-phosphate + D-glycero-beta-D-manno-heptose 7-phosphate. Its pathway is carbohydrate biosynthesis; D-glycero-D-manno-heptose 7-phosphate biosynthesis; D-glycero-alpha-D-manno-heptose 7-phosphate and D-glycero-beta-D-manno-heptose 7-phosphate from sedoheptulose 7-phosphate: step 1/1. Catalyzes the isomerization of sedoheptulose 7-phosphate in D-glycero-D-manno-heptose 7-phosphate. In Nitratidesulfovibrio vulgaris (strain ATCC 29579 / DSM 644 / CCUG 34227 / NCIMB 8303 / VKM B-1760 / Hildenborough) (Desulfovibrio vulgaris), this protein is Phosphoheptose isomerase.